The chain runs to 237 residues: Putative biotin ligase (237 aa).

The BPL/LPL catalytic domain occupies 1–191 (MEIIHLSEID…KKYKKYSITI (191 aa)).

This sequence belongs to the biotin--protein ligase family.

It catalyses the reaction biotin + L-lysyl-[protein] + ATP = N(6)-biotinyl-L-lysyl-[protein] + AMP + diphosphate + H(+). The polypeptide is Putative biotin ligase (Methanocaldococcus jannaschii (strain ATCC 43067 / DSM 2661 / JAL-1 / JCM 10045 / NBRC 100440) (Methanococcus jannaschii)).